Consider the following 502-residue polypeptide: Lysine--tRNA ligase (502 aa).

Residues Glu412 and Glu419 each coordinate Mg(2+).

Belongs to the class-II aminoacyl-tRNA synthetase family. As to quaternary structure, homodimer. Mg(2+) serves as cofactor.

It localises to the cytoplasm. The enzyme catalyses tRNA(Lys) + L-lysine + ATP = L-lysyl-tRNA(Lys) + AMP + diphosphate. The chain is Lysine--tRNA ligase from Buchnera aphidicola subsp. Cinara cedri (strain Cc).